The following is a 740-amino-acid chain: Ribulose bisphosphate carboxylase, chloroplastic (740 aa).

A chloroplast-targeting transit peptide spans 1 to 55 (MPSSSFTTGLALGAGALVGANAFVAPTAKTTNLRAPTQEASLQVAASQQTEQPAP). Residues 56–76 (STSALPWAFGAGACLALAAGG) traverse the membrane as a helical segment. N213 serves as a coordination point for substrate. K268 acts as the Proton acceptor in catalysis. K270 is a binding site for substrate. Mg(2+) contacts are provided by K293, D295, and E296. The residue at position 293 (K293) is an N6-carboxylysine. H389 functions as the Proton acceptor in the catalytic mechanism. Substrate is bound by residues R390, H423, and S470.

This sequence belongs to the RuBisCO large chain family. Type II subfamily. As to quaternary structure, homodimer. Requires Mg(2+) as cofactor.

It is found in the plastid. The protein resides in the chloroplast membrane. It catalyses the reaction 2 (2R)-3-phosphoglycerate + 2 H(+) = D-ribulose 1,5-bisphosphate + CO2 + H2O. The enzyme catalyses D-ribulose 1,5-bisphosphate + O2 = 2-phosphoglycolate + (2R)-3-phosphoglycerate + 2 H(+). Its function is as follows. RuBisCO catalyzes two reactions: the carboxylation of D-ribulose 1,5-bisphosphate, the primary event in carbon dioxide fixation, as well as the oxidative fragmentation of the pentose substrate. Both reactions occur simultaneously and in competition at the same active site. The protein is Ribulose bisphosphate carboxylase, chloroplastic (rbcL) of Heterocapsa triquetra (Dinoflagellate).